The following is an 86-amino-acid chain: MNIFGVGLPEVTVILILALLIFGPKKLPELGKQLGKTLKSLKKASNEFQNEIDQVMNEEDESPKSIESNQTNEINQEKIDSENSKK.

The helical transmembrane segment at 3 to 23 (IFGVGLPEVTVILILALLIFG) threads the bilayer. The segment at 56 to 86 (MNEEDESPKSIESNQTNEINQEKIDSENSKK) is disordered. The span at 65–74 (SIESNQTNEI) shows a compositional bias: polar residues. Residues 75 to 86 (NQEKIDSENSKK) show a composition bias toward basic and acidic residues.

This sequence belongs to the TatA/E family. Forms a complex with TatC.

It is found in the cell inner membrane. Functionally, part of the twin-arginine translocation (Tat) system that transports large folded proteins containing a characteristic twin-arginine motif in their signal peptide across membranes. TatA could form the protein-conducting channel of the Tat system. This chain is Sec-independent protein translocase protein TatA, found in Prochlorococcus marinus (strain MIT 9215).